Here is a 434-residue protein sequence, read N- to C-terminus: Eukaryotic translation initiation factor 3 subunit E (434 aa).

The region spanning 219–392 is the PCI domain; it reads FFNHPKGRDL…GHVVMGTQPL (174 aa).

It belongs to the eIF-3 subunit E family. As to quaternary structure, component of the eukaryotic translation initiation factor 3 (eIF-3) complex. The eIF-3 complex interacts with pix. Interacts with mxt.

The protein resides in the cytoplasm. Its function is as follows. Component of the eukaryotic translation initiation factor 3 (eIF-3) complex, which is involved in protein synthesis of a specialized repertoire of mRNAs and, together with other initiation factors, stimulates binding of mRNA and methionyl-tRNAi to the 40S ribosome. The eIF-3 complex specifically targets and initiates translation of a subset of mRNAs involved in cell proliferation. The polypeptide is Eukaryotic translation initiation factor 3 subunit E (eIF3-S6) (Drosophila grimshawi (Hawaiian fruit fly)).